The sequence spans 1447 residues: Spike glycoprotein (1447 aa).

The signal sequence occupies residues 1-28; sequence MKKLFVVLVVMPLIYGDNFPCSKLTNRT. 2 S1 regions span residues 17 to 774 and 29 to 774; these read DNFP…FYYY and IGNQ…FYYY. The Virion surface segment spans residues 29 to 1388; sequence IGNQWNLIET…NRIETYVKWP (1360 aa). The interaction with host ANPEP stretch occupies residues 655 to 799; the sequence is VIYEEGDNIV…DSNDVDCEPV (145 aa). Residues 775 to 1447 form an S2 region; the sequence is SIYNYTNDRT…YEPIEKVHVH (673 aa). Positions 1020-1041 are fusion peptide; the sequence is AGGITLGALGGGAVAIPFAVAV. Positions 1035-1154 are heptad repeat 1 (HR1); the sequence is IPFAVAVQAR…QVDRLITGRL (120 aa). 2 coiled-coil regions span residues 1102–1146 and 1336–1378; these read QDVV…DAQV and TYLN…LEWL. Positions 1303–1400 are heptad repeat 2 (HR2); the sequence is PDYIDINQTV…VWLLIGLVVI (98 aa). Residues 1389–1408 traverse the membrane as a helical segment; it reads WYVWLLIGLVVIFCIPLLLF. The Intravirion portion of the chain corresponds to 1409-1447; sequence CCCSTGCCGCIGCLGSCCHSICSRRQFENYEPIEKVHVH. A KxHxx motif is present at residues 1443–1447; it reads KVHVH.

It belongs to the alphacoronaviruses spike protein family. Homotrimer. During virus morphogenesis, found in a complex with M and HE proteins. Interacts with host ANPEP.

It is found in the virion membrane. The protein resides in the host endoplasmic reticulum-Golgi intermediate compartment membrane. Its function is as follows. S1 region attaches the virion to the cell membrane by interacting with host ANPEP/aminopeptidase N, initiating the infection. Binding to the receptor probably induces conformational changes in the S glycoprotein unmasking the fusion peptide of S2 region and activating membranes fusion. S2 region belongs to the class I viral fusion protein. Under the current model, the protein has at least 3 conformational states: pre-fusion native state, pre-hairpin intermediate state, and post-fusion hairpin state. During viral and target cell membrane fusion, the coiled coil regions (heptad repeats) regions assume a trimer-of-hairpins structure, positioning the fusion peptide in close proximity to the C-terminal region of the ectodomain. The formation of this structure appears to drive apposition and subsequent fusion of viral and target cell membranes. The sequence is that of Spike glycoprotein from Sus scrofa (Pig).